We begin with the raw amino-acid sequence, 1342 residues long: DNA-directed RNA polymerase subunit beta (1342 aa).

Belongs to the RNA polymerase beta chain family. The RNAP catalytic core consists of 2 alpha, 1 beta, 1 beta' and 1 omega subunit. When a sigma factor is associated with the core the holoenzyme is formed, which can initiate transcription.

It catalyses the reaction RNA(n) + a ribonucleoside 5'-triphosphate = RNA(n+1) + diphosphate. DNA-dependent RNA polymerase catalyzes the transcription of DNA into RNA using the four ribonucleoside triphosphates as substrates. This Salmonella typhi protein is DNA-directed RNA polymerase subunit beta.